The sequence spans 143 residues: MSDVEQEQIVEEVVVEEQSGAITIEDALKVVLRTSLVHDGLARGLREASKALSKREAQLCVLCDSVTEESIIKLVEALCNEPEEKIPLIKVSDAKLLGEWAGLCQLDRDGNARKVVGASCVVVKNWGADSDERNILLEHFSQQ.

The protein belongs to the eukaryotic ribosomal protein eS12 family. As to quaternary structure, component of the small ribosomal subunit. Mature ribosomes consist of a small (40S) and a large (60S) subunit. The 40S subunit contains about 32 different proteins and 1 molecule of RNA (18S). The 60S subunit contains 45 different proteins and 3 molecules of RNA (25S, 5.8S and 5S).

It is found in the cytoplasm. Component of the ribosome, a large ribonucleoprotein complex responsible for the synthesis of proteins in the cell. The small ribosomal subunit (SSU) binds messenger RNAs (mRNAs) and translates the encoded message by selecting cognate aminoacyl-transfer RNA (tRNA) molecules. The large subunit (LSU) contains the ribosomal catalytic site termed the peptidyl transferase center (PTC), which catalyzes the formation of peptide bonds, thereby polymerizing the amino acids delivered by tRNAs into a polypeptide chain. The nascent polypeptides leave the ribosome through a tunnel in the LSU and interact with protein factors that function in enzymatic processing, targeting, and the membrane insertion of nascent chains at the exit of the ribosomal tunnel. The chain is Small ribosomal subunit protein eS12 (RPS12) from Candida albicans (strain SC5314 / ATCC MYA-2876) (Yeast).